The sequence spans 298 residues: Glycine--tRNA ligase alpha subunit (298 aa).

The protein belongs to the class-II aminoacyl-tRNA synthetase family. Tetramer of two alpha and two beta subunits.

The protein resides in the cytoplasm. It carries out the reaction tRNA(Gly) + glycine + ATP = glycyl-tRNA(Gly) + AMP + diphosphate. The sequence is that of Glycine--tRNA ligase alpha subunit from Helicobacter pylori (strain HPAG1).